Here is a 386-residue protein sequence, read N- to C-terminus: MRIGMVCPYSFDVPGGVQSHVLQLAEVLRDAGHEVSVLAPASPHVKLPDYVVSGGKAVPIPYNGSVARLRFGPATHRKVKKWIAEGDFDVLHIHEPNAPSLSMLALQAAEGPIVATFHTSTTKSLTLSVFQGILRPYHEKIIGRIAVSDLARRWQMEALGSDAVEIPNGVDVASFADAPLLDGYPREGRTVLFLGRYDEPRKGMAVLLAALPKLVARFPDVEILIVGRGDEDELREQAGDLAGHLRFLGQVDDATKASAMRSADVYCAPHLGGESFGIVLVEAMAAGTAVVASDLDAFRRVLADGDAGRLVPVDDADGMAAALIGILEDDQLRAGYVARASERVHRYDWSVVSAQIMRVYETVSGAGIKVQVSGAANRDETAGESV.

GDP-alpha-D-mannose-binding residues include Tyr-9 and Gly-16. A 1,2-diacyl-sn-glycero-3-phospho-(1D-myo-inositol) is bound by residues Gln-18, Tyr-62–Asn-63, and Arg-68. GDP-alpha-D-mannose-binding positions include Arg-196, Arg-201–Lys-202, Val-251–Asp-253, Lys-256, Glu-274–Ile-278, and Glu-282.

It belongs to the glycosyltransferase group 1 family. Glycosyltransferase 4 subfamily. As to quaternary structure, monomer. Requires Mg(2+) as cofactor.

The protein resides in the cell membrane. It catalyses the reaction a 1,2-diacyl-sn-glycero-3-phospho-(1D-myo-inositol) + GDP-alpha-D-mannose = a 1,2-diacyl-sn-glycero-3-phospho-[alpha-D-mannopyranosyl-(1&lt;-&gt;6)-D-myo-inositol] + GDP + H(+). Its pathway is phospholipid metabolism; phosphatidylinositol metabolism. Involved in the biosynthesis of phosphatidyl-myo-inositol mannosides (PIM) which are early precursors in the biosynthesis of lipomannans (LM) and lipoarabinomannans (LAM). Catalyzes the addition of a mannosyl residue from GDP-D-mannose (GDP-Man) to the position 2 of the carrier lipid phosphatidyl-myo-inositol (PI) to generate a phosphatidyl-myo-inositol bearing an alpha-1,2-linked mannose residue (PIM1). In contrary to PimB, the mannosyltransferase PimA is unable to transfer a mannose residue to the position 6 of the phosphatidyl-myo-inositol of PIM1. This is Phosphatidyl-myo-inositol mannosyltransferase from Mycolicibacterium smegmatis (strain ATCC 700084 / mc(2)155) (Mycobacterium smegmatis).